Here is an 83-residue protein sequence, read N- to C-terminus: Apolipoprotein C-I, acidic form (83 aa).

The signal sequence occupies residues M1–G26.

The protein belongs to the apolipoprotein C1 family.

The protein localises to the secreted. Inhibitor of lipoprotein binding to the low density lipoprotein (LDL) receptor, LDL receptor-related protein, and very low density lipoprotein (VLDL) receptor. Associates with high density lipoproteins (HDL) and the triacylglycerol-rich lipoproteins in the plasma and makes up about 10% of the protein of the VLDL and 2% of that of HDL. Appears to interfere directly with fatty acid uptake and is also the major plasma inhibitor of cholesteryl ester transfer protein (CETP). Binds free fatty acids and reduces their intracellular esterification. Modulates the interaction of APOE with beta-migrating VLDL and inhibits binding of beta-VLDL to the LDL receptor-related protein. This Pongo abelii (Sumatran orangutan) protein is Apolipoprotein C-I, acidic form (APOC1A).